Reading from the N-terminus, the 186-residue chain is Ribosome-recycling factor (186 aa).

It belongs to the RRF family.

The protein resides in the cytoplasm. Functionally, responsible for the release of ribosomes from messenger RNA at the termination of protein biosynthesis. May increase the efficiency of translation by recycling ribosomes from one round of translation to another. The sequence is that of Ribosome-recycling factor from Bartonella henselae (strain ATCC 49882 / DSM 28221 / CCUG 30454 / Houston 1) (Rochalimaea henselae).